A 487-amino-acid polypeptide reads, in one-letter code: uncharacterized protein (487 aa).

An N-terminal signal peptide occupies residues 1–31 (MRFHRQGISAIIGVLLIVLLGFCWKLSGSYG). N-linked (GlcNAc...) asparagine glycosylation is found at asparagine 40, asparagine 68, asparagine 150, asparagine 220, asparagine 304, asparagine 367, asparagine 442, and asparagine 448. The interval 141–176 (LERRHGRFGNGTNGDHPKGPPPPPPPPDEKGRGSQK) is disordered.

In terms of processing, N-glycosylated.

This is an uncharacterized protein from Saccharomyces cerevisiae (strain ATCC 204508 / S288c) (Baker's yeast).